The sequence spans 226 residues: Gap junction beta-2 protein (226 aa).

Residues 2 to 13 (DWSALQTILGGV) lie within the membrane without spanning it. The Cytoplasmic portion of the chain corresponds to 14 to 20 (NKHSTSI). The chain crosses the membrane as a helical span at residues 21 to 40 (GKIWLTVLFIFRIMILVVAA). The Extracellular segment spans residues 41–73 (KEVWGDEQADFVCNTLQPGCKNVCYDHYFPISH). Ca(2+) contacts are provided by E42, G45, and E47. Intrachain disulfides connect C53–C180, C60–C174, and C64–C169. The chain crosses the membrane as a helical span at residues 74 to 94 (IRLWALQLIFVSTPALLVAMH). The Cytoplasmic portion of the chain corresponds to 95 to 135 (VAYYRHEKKRKFIRGEIKTEFKDIEEIKNQKVRIEGSLWWT). The helical transmembrane segment at 136 to 156 (YTGSIFFRVIFEAAFMYVFYV) threads the bilayer. Over 157–189 (MYDGFAMQRLVKCNAWPCPNTVDCFVSRPTEKT) the chain is Extracellular. The chain crosses the membrane as a helical span at residues 190 to 210 (VFTVFMIAVSGICILLNVTEL). Residues 211-226 (CYLLIRFCSGKSKKPV) lie on the Cytoplasmic side of the membrane.

It belongs to the connexin family. Beta-type (group I) subfamily. In terms of assembly, a hemichannel or connexon is composed of a hexamer of connexins. A functional gap junction is formed by the apposition of two hemichannels. Forms heteromeric channels with GJB4. Interacts with CNST.

Its subcellular location is the cell membrane. The protein localises to the cell junction. The protein resides in the gap junction. Its function is as follows. Structural component of gap junctions. Gap junctions are dodecameric channels that connect the cytoplasm of adjoining cells. They are formed by the docking of two hexameric hemichannels, one from each cell membrane. Small molecules and ions diffuse from one cell to a neighboring cell via the central pore. The protein is Gap junction beta-2 protein (GJB2) of Ovis aries (Sheep).